We begin with the raw amino-acid sequence, 49 residues long: Large ribosomal subunit protein bL33B (49 aa).

It belongs to the bacterial ribosomal protein bL33 family.

In Lactobacillus delbrueckii subsp. bulgaricus (strain ATCC BAA-365 / Lb-18), this protein is Large ribosomal subunit protein bL33B.